Here is a 255-residue protein sequence, read N- to C-terminus: Protein NEN4 (255 aa).

Residues 11 to 174 (VFFDLETNVP…DDVRMNLEVL (164 aa)) enclose the Exonuclease domain. Residues D14 and E16 each coordinate Mg(2+). H161 serves as the catalytic Proton donor/acceptor. D166 is a binding site for Mg(2+).

Mg(2+) is required as a cofactor. In terms of tissue distribution, expressed in the sieve elements and phloem pole pericycle cells.

It localises to the nucleus. Probable exonuclease required for enuclation of sieve elements. The chain is Protein NEN4 from Arabidopsis thaliana (Mouse-ear cress).